Reading from the N-terminus, the 571-residue chain is Proline--tRNA ligase (571 aa).

The protein belongs to the class-II aminoacyl-tRNA synthetase family. ProS type 1 subfamily. Homodimer.

It is found in the cytoplasm. The catalysed reaction is tRNA(Pro) + L-proline + ATP = L-prolyl-tRNA(Pro) + AMP + diphosphate. Its function is as follows. Catalyzes the attachment of proline to tRNA(Pro) in a two-step reaction: proline is first activated by ATP to form Pro-AMP and then transferred to the acceptor end of tRNA(Pro). As ProRS can inadvertently accommodate and process non-cognate amino acids such as alanine and cysteine, to avoid such errors it has two additional distinct editing activities against alanine. One activity is designated as 'pretransfer' editing and involves the tRNA(Pro)-independent hydrolysis of activated Ala-AMP. The other activity is designated 'posttransfer' editing and involves deacylation of mischarged Ala-tRNA(Pro). The misacylated Cys-tRNA(Pro) is not edited by ProRS. This is Proline--tRNA ligase from Actinobacillus pleuropneumoniae serotype 3 (strain JL03).